A 378-amino-acid chain; its full sequence is Filamin-binding LIM protein 1 (378 aa).

The segment at 1–69 (MASKPEKRVA…RSWMPPGRAA (69 aa)) is filamin-binding. Residues 38–179 (WPGRPWESAP…PPPEEPVSFP (142 aa)) form a disordered region. Positions 103–115 (LPPPPPPPAADLP) are enriched in pro residues. LIM zinc-binding domains lie at 186–247 (DICA…TLEK), 248–305 (CGKC…RKFA), and 306–375 (PVCS…RSAA). Positions 281–378 (IGDESFALDS…HVKRSAAGCC (98 aa)) are PLEKHC1-binding.

As to quaternary structure, interacts with PLEKHC1, FLNA, FLNB and FLNC. Interacts with NKX2-5.

Its subcellular location is the cell junction. It is found in the focal adhesion. It localises to the cytoplasm. The protein resides in the cytoskeleton. The protein localises to the stress fiber. Functionally, serves as an anchoring site for cell-ECM adhesion proteins and filamin-containing actin filaments. Is implicated in cell shape modulation (spreading) and motility. May participate in the regulation of filamin-mediated cross-linking and stabilization of actin filaments. May also regulate the assembly of filamin-containing signaling complexes that control actin assembly. Promotes dissociation of FLNA from ITGB3 and ITGB7. Promotes activation of integrins and regulates integrin-mediated cell-cell adhesion. The protein is Filamin-binding LIM protein 1 (FBLIM1) of Bos taurus (Bovine).